The following is a 329-amino-acid chain: Acrosin (329 aa).

The signal sequence occupies residues 1-17; sequence MLPTAVLLVLAVSVVAR. Asn19 carries an N-linked (GlcNAc...) asparagine glycan. 6 disulfides stabilise this stretch: Cys22-Cys152, Cys26-Cys160, Cys71-Cys87, Cys175-Cys244, Cys207-Cys223, and Cys234-Cys264. One can recognise a Peptidase S1 domain in the interval 40-288; sequence IIGGQDAAHG…YLNWIASKIG (249 aa). Catalysis depends on charge relay system residues His86 and Asp140. Residue Asn208 is glycosylated (N-linked (GlcNAc...) asparagine). The active-site Charge relay system is the Ser238.

It belongs to the peptidase S1 family. As to quaternary structure, heavy chain (catalytic) and a light chain linked by two disulfide bonds. Forms a heterodimer with SERPINA5.

It carries out the reaction Preferential cleavage: Arg-|-Xaa, Lys-|-Xaa.. Its activity is regulated as follows. Inhibited by SERPINA5. Its function is as follows. Acrosin is the major protease of mammalian spermatozoa. It is a serine protease of trypsin-like cleavage specificity, it is synthesized in a zymogen form, proacrosin and stored in the acrosome. In Ovis aries (Sheep), this protein is Acrosin (ACR).